Reading from the N-terminus, the 720-residue chain is Biotin biosynthesis bifunctional protein BioWF (720 aa).

The interval 1–39 (MRFSIKMRASARVSSSPSTSDGSSGDHTESRDRADRHIS) is disordered. A compositionally biased stretch (low complexity) spans 8–23 (RASARVSSSPSTSDGS). The span at 24-39 (SGDHTESRDRADRHIS) shows a compositional bias: basic and acidic residues. R314 serves as a coordination point for substrate. Pyridoxal 5'-phosphate is bound at residue 401–402 (GY). H439 serves as a coordination point for substrate. Pyridoxal 5'-phosphate contacts are provided by residues S488, 513 to 516 (DDAH), and 564 to 567 (TASK). K567 bears the N6-(pyridoxal phosphate)lysine mark. T684 contacts substrate.

This sequence in the N-terminal section; belongs to the BioW family. It in the C-terminal section; belongs to the class-II pyridoxal-phosphate-dependent aminotransferase family. BioF subfamily. Homodimer. The cofactor is Mg(2+). It depends on pyridoxal 5'-phosphate as a cofactor.

The enzyme catalyses heptanedioate + ATP + CoA = 6-carboxyhexanoyl-CoA + AMP + diphosphate. It catalyses the reaction 6-carboxyhexanoyl-[ACP] + L-alanine + H(+) = (8S)-8-amino-7-oxononanoate + holo-[ACP] + CO2. Its pathway is metabolic intermediate metabolism; pimeloyl-CoA biosynthesis; pimeloyl-CoA from pimelate: step 1/1. The protein operates within cofactor biosynthesis; biotin biosynthesis. Catalyzes both the decarboxylative condensation of pimeloyl-[acyl-carrier protein] and L-alanine to produce 8-amino-7-oxononanoate (AON), [acyl-carrier protein], and carbon dioxide, and the transformation of pimelate into pimeloyl-CoA with concomitant hydrolysis of ATP to AMP. The polypeptide is Biotin biosynthesis bifunctional protein BioWF (bioWF) (Corynebacterium kroppenstedtii (strain DSM 44385 / JCM 11950 / CIP 105744 / CCUG 35717)).